The primary structure comprises 348 residues: RNA 3'-terminal phosphate cyclase (348 aa).

ATP-binding positions include Gln102 and His285–Asp288. Residue His311 is the Tele-AMP-histidine intermediate of the active site.

Belongs to the RNA 3'-terminal cyclase family. Type 1 subfamily.

The protein resides in the cytoplasm. The catalysed reaction is a 3'-end 3'-phospho-ribonucleotide-RNA + ATP = a 3'-end 2',3'-cyclophospho-ribonucleotide-RNA + AMP + diphosphate. In terms of biological role, catalyzes the conversion of 3'-phosphate to a 2',3'-cyclic phosphodiester at the end of RNA. The mechanism of action of the enzyme occurs in 3 steps: (A) adenylation of the enzyme by ATP; (B) transfer of adenylate to an RNA-N3'P to produce RNA-N3'PP5'A; (C) and attack of the adjacent 2'-hydroxyl on the 3'-phosphorus in the diester linkage to produce the cyclic end product. The biological role of this enzyme is unknown but it is likely to function in some aspects of cellular RNA processing. The protein is RNA 3'-terminal phosphate cyclase of Korarchaeum cryptofilum (strain OPF8).